A 329-amino-acid polypeptide reads, in one-letter code: MWVFKFLLLPVVSFALSPEETLDTQWELWKKTHGKQYNSKVDEISRRLIWEKNLKKISVHNLEASLGAHTYELAMNHLGDMTSEEVVQKMTGLRVPPSRSFSNDTLYTPEWEGRVPDSIDYRKKGYVTPVKNQGQCGSCWAFSSAGALEGQLKKKTGKLLALSPQNLVDCVSENYGCGGGYMTTAFQYVQQNGGIDSEDAYPYVGQDESCMYNATAKAAKCRGYREIPVGNEKALKRAVARVGPVSVSIDASLTSFQFYSRGVYYDENCDRDNVNHAVLVVGYGTQKGNKYWIIKNSWGESWGNKGYVLLARNKNNACGITNLASFPKM.

Residues 1–15 form the signal peptide; that stretch reads MWVFKFLLLPVVSFA. Positions 16–114 are cleaved as a propeptide — activation peptide; the sequence is LSPEETLDTQ…TLYTPEWEGR (99 aa). N-linked (GlcNAc...) asparagine glycosylation is present at N103. 2 cysteine pairs are disulfide-bonded: C136–C177 and C170–C210. C139 is an active-site residue. N-linked (GlcNAc...) asparagine glycosylation occurs at N213. C269 and C318 are joined by a disulfide. Catalysis depends on residues H276 and N296.

This sequence belongs to the peptidase C1 family.

It is found in the lysosome. It localises to the secreted. Its subcellular location is the apical cell membrane. The catalysed reaction is Broad proteolytic activity. With small-molecule substrates and inhibitors, the major determinant of specificity is P2, which is preferably Leu, Met &gt; Phe, and not Arg.. Thiol protease involved in osteoclastic bone resorption and may participate partially in the disorder of bone remodeling. Displays potent endoprotease activity against fibrinogen at acid pH. May play an important role in extracellular matrix degradation. Involved in the release of thyroid hormone thyroxine (T4) by limited proteolysis of TG/thyroglobulin in the thyroid follicle lumen. This is Cathepsin K (Ctsk) from Rattus norvegicus (Rat).